Consider the following 310-residue polypeptide: Homeobox protein dsc-1 (310 aa).

Positions 180–239 (RRRFRTNFTELQSTFLEDSFKESHYPDHKAKKYMADFLKIPEDRITVWFQNRRAKWRRKE) form a DNA-binding region, homeobox. A disordered region spans residues 262-310 (CFSAQHPDDGPNAKHPNSFGIPNQPMSLDQFPMNTEQDFPEFPSLQEHQ). Residues 281-298 (GIPNQPMSLDQFPMNTEQ) show a composition bias toward polar residues.

In terms of tissue distribution, expressed in the bilateral sensory neurons AWA, AWB, AWC, ASE, FLP and PVD. Also expressed in the enteric intestinal and anal depressor muscles.

The protein resides in the nucleus. Its subcellular location is the cell projection. It is found in the axon. It localises to the cytoplasm. Its function is as follows. Transcriptional regulator which plays a role in the expulsion step of defecation by controlling enteric muscle-specific expression of exp-1 which is required for enteric muscle contraction. Not required for exp-1 expression in the PDA neuron. Also involved in controlling the length of the defecation cycle. The chain is Homeobox protein dsc-1 from Caenorhabditis elegans.